Here is a 590-residue protein sequence, read N- to C-terminus: DNA primase (590 aa).

A CHC2-type zinc finger spans residues 37–61 (CPFHKEKTPSFSVSPTKQFYHCFSC). Residues 255–337 (GRILVVEGYM…DKSLHFLFLP (83 aa)) enclose the Toprim domain. Positions 261, 305, and 307 each coordinate Mg(2+).

The protein belongs to the DnaG primase family. In terms of assembly, monomer. Interacts with DnaB. It depends on Zn(2+) as a cofactor. Requires Mg(2+) as cofactor.

It catalyses the reaction ssDNA + n NTP = ssDNA/pppN(pN)n-1 hybrid + (n-1) diphosphate.. Functionally, RNA polymerase that catalyzes the synthesis of short RNA molecules used as primers for DNA polymerase during DNA replication. This Neisseria meningitidis serogroup A / serotype 4A (strain DSM 15465 / Z2491) protein is DNA primase.